Here is an 83-residue protein sequence, read N- to C-terminus: Retinal cone rhodopsin-sensitive cGMP 3',5'-cyclic phosphodiesterase subunit gamma (83 aa).

A disordered region spans residues 1–51; sequence MSDSPCLSPPAPSQGPTTPRKGPPKFKQRQTRQFKSKPPKKGVKGFGDDIP. Positions 22–43 are enriched in basic residues; that stretch reads GPPKFKQRQTRQFKSKPPKKGV.

This sequence belongs to the rod/cone cGMP-PDE gamma subunit family. Tetramer composed of two catalytic chains (alpha and beta), and two inhibitory chains (gamma).

It carries out the reaction 3',5'-cyclic GMP + H2O = GMP + H(+). Functionally, participates in processes of transmission and amplification of the visual signal. cGMP-PDEs are the effector molecules in G-protein-mediated phototransduction in vertebrate rods and cones. The sequence is that of Retinal cone rhodopsin-sensitive cGMP 3',5'-cyclic phosphodiesterase subunit gamma (Pde6h) from Rattus norvegicus (Rat).